The chain runs to 437 residues: Probable D-serine dehydratase (437 aa).

K106 is subject to N6-(pyridoxal phosphate)lysine.

It belongs to the serine/threonine dehydratase family. DsdA subfamily. It depends on pyridoxal 5'-phosphate as a cofactor.

The enzyme catalyses D-serine = pyruvate + NH4(+). This Hahella chejuensis (strain KCTC 2396) protein is Probable D-serine dehydratase.